The following is a 187-amino-acid chain: Calcium and integrin-binding family member 3 (187 aa).

3 EF-hand domains span residues 66–101 (KDNPFRQRIAQVFSEDGDGHMTLDNFLDMFSVMSEM), 103–138 (PRDLKAYYAFKIYDFNNDDYICAWDLEQTVTKLTRG), and 144–179 (EVSLVCEKVLDEADGDHDGRLSLEDFQNMILRAPDF). Ca(2+)-binding residues include Asp116, Asn118, Asp120, Tyr122, Asp127, Asp157, Asp159, Asp161, Arg163, and Asp168.

Monomer and homodimer. Interacts with ITGA2B (via C-terminus cytoplasmic tail region); the interaction is stabilized/increased in a calcium and magnesium-dependent manner. Interacts with TMC1.

Its function is as follows. Acts a an auxiliary subunit of the sensory mechanoelectrical transduction (MET) channel in hair cells. Plays a role in regulating hair cell MET channel localization and function. This is Calcium and integrin-binding family member 3 (CIB3) from Homo sapiens (Human).